A 104-amino-acid chain; its full sequence is Small ribosomal subunit protein bS16 (104 aa).

Belongs to the bacterial ribosomal protein bS16 family.

The chain is Small ribosomal subunit protein bS16 from Wolbachia pipientis subsp. Culex pipiens (strain wPip).